The chain runs to 595 residues: Protein halfway (595 aa).

Disordered stretches follow at residues 1–42 and 64–98; these read MLLT…ADDE and TGAA…PLLP. Asparagine 250 and asparagine 255 each carry an N-linked (GlcNAc...) asparagine glycan. Residues 347–402 enclose the LRRNT domain; that stretch reads ESTKRCMTKCPVIPNYGSCKCRFESIMIIQDDQSKPKCHVDCSNLGLVELPPRLPD. LRR repeat units lie at residues 403 to 424, 429 to 450, and 454 to 475; these read NTFV…FQTN, NINR…EGTK, and NFQR…FLNN. Positions 489–538 constitute an LRRCT domain; it reads NKLQCDCNSAKTLQNWLKERSTDIPDYMEIRCRNIPQSVIELQEAKLCQS.

Has a role in the ecdysone induced cascade; probably indirect control of 'late' ecdysone genes. In Drosophila pseudoobscura pseudoobscura (Fruit fly), this protein is Protein halfway (hfw).